A 667-amino-acid polypeptide reads, in one-letter code: WD40 repeat-containing protein DDB_G0271002 (667 aa).

WD repeat units lie at residues 165–204 and 210–249; these read NHGV…PQET and KHKH…LLRI. Low complexity predominate over residues 278–293; the sequence is SSNSRDNNNNNSNSNN. 3 disordered regions span residues 278–301, 316–345, and 389–440; these read SSNS…GIII, LVEN…DNDD, and DIIF…ATTT. A compositionally biased stretch (acidic residues) spans 325–345; sequence PMPEEEEEEEEEEVNQVDNDD. Low complexity predominate over residues 400-410; sequence NQHQQQQQQNQ. The segment covering 411-428 has biased composition (acidic residues); that stretch reads EIEEEGQEGQEEQEDGTE. The span at 429 to 440 shows a compositional bias: low complexity; the sequence is NENNQGTIATTT.

This Dictyostelium discoideum (Social amoeba) protein is WD40 repeat-containing protein DDB_G0271002.